The chain runs to 147 residues: MKIVIQRVKEASVSIDGKIAGAIDQGLLLLVGIGPDDQAEDIDYAVRKISHMRIFSDSEGKMNRSIQDIEGSVLSISQFTLYADTKKGNRPAFTGAAKPDKASQLYNSFNDHLEELVPVKRGVFGADMQVSLINDGPVTIILDTKNR.

Positions Gly136–Pro137 match the Gly-cisPro motif, important for rejection of L-amino acids motif.

It belongs to the DTD family. In terms of assembly, homodimer.

Its subcellular location is the cytoplasm. The catalysed reaction is glycyl-tRNA(Ala) + H2O = tRNA(Ala) + glycine + H(+). The enzyme catalyses a D-aminoacyl-tRNA + H2O = a tRNA + a D-alpha-amino acid + H(+). Its function is as follows. An aminoacyl-tRNA editing enzyme that deacylates mischarged D-aminoacyl-tRNAs. Also deacylates mischarged glycyl-tRNA(Ala), protecting cells against glycine mischarging by AlaRS. Acts via tRNA-based rather than protein-based catalysis; rejects L-amino acids rather than detecting D-amino acids in the active site. By recycling D-aminoacyl-tRNA to D-amino acids and free tRNA molecules, this enzyme counteracts the toxicity associated with the formation of D-aminoacyl-tRNA entities in vivo and helps enforce protein L-homochirality. The protein is D-aminoacyl-tRNA deacylase of Streptococcus equi subsp. zooepidemicus (strain MGCS10565).